A 354-amino-acid chain; its full sequence is Histidinol-phosphate aminotransferase (354 aa).

Lysine 210 bears the N6-(pyridoxal phosphate)lysine mark.

The protein belongs to the class-II pyridoxal-phosphate-dependent aminotransferase family. Histidinol-phosphate aminotransferase subfamily. As to quaternary structure, homodimer. Pyridoxal 5'-phosphate is required as a cofactor.

It catalyses the reaction L-histidinol phosphate + 2-oxoglutarate = 3-(imidazol-4-yl)-2-oxopropyl phosphate + L-glutamate. The protein operates within amino-acid biosynthesis; L-histidine biosynthesis; L-histidine from 5-phospho-alpha-D-ribose 1-diphosphate: step 7/9. In Clostridium botulinum (strain Kyoto / Type A2), this protein is Histidinol-phosphate aminotransferase.